A 135-amino-acid polypeptide reads, in one-letter code: Gene 52 protein (135 aa).

2 disordered regions span residues 1–20 (MASG…PTPE) and 110–135 (LGGR…AEKQ). Residues 122 to 135 (SKPRGRSKHRAEKQ) are compositionally biased toward basic residues.

This sequence belongs to the herpesviridae BLRF2 family.

This Equine herpesvirus 2 (strain 86/87) (EHV-2) protein is Gene 52 protein (52).